The following is a 415-amino-acid chain: Peptide chain release factor subunit 1-2 (415 aa).

This sequence belongs to the eukaryotic release factor 1 family. As to quaternary structure, heterodimer of two subunits, one of which binds GTP.

Its subcellular location is the cytoplasm. Functionally, directs the termination of nascent peptide synthesis (translation) in response to the termination codons UAA, UAG and UGA. This chain is Peptide chain release factor subunit 1-2, found in Methanosarcina acetivorans (strain ATCC 35395 / DSM 2834 / JCM 12185 / C2A).